We begin with the raw amino-acid sequence, 199 residues long: Probable cobalt-precorrin-6B C(15)-methyltransferase (decarboxylating) (199 aa).

Residues threonine 24, 48–52 (GCGTG), aspartate 72, and alanine 101 each bind S-adenosyl-L-methionine.

Belongs to the methyltransferase superfamily. Archaeal-type CbiT family.

It carries out the reaction Co-precorrin-6B + S-adenosyl-L-methionine = Co-precorrin-7 + S-adenosyl-L-homocysteine + CO2. It functions in the pathway cofactor biosynthesis; adenosylcobalamin biosynthesis; cob(II)yrinate a,c-diamide from sirohydrochlorin (anaerobic route): step 8/10. Catalyzes the methylation of C-15 in cobalt-precorrin-6B followed by the decarboxylation of C-12 to form cobalt-precorrin-7. The sequence is that of Probable cobalt-precorrin-6B C(15)-methyltransferase (decarboxylating) from Saccharolobus solfataricus (strain ATCC 35092 / DSM 1617 / JCM 11322 / P2) (Sulfolobus solfataricus).